The following is a 40-amino-acid chain: Snaclec tokaracetin subunit beta (40 aa).

Cys2 and Cys13 are disulfide-bonded. Positions 9 to 40 (YDEHCYRVFQQKMNWEDAEKFCTQQHKGXHLX) constitute a C-type lectin domain.

Belongs to the snaclec family. Heterodimer of subunits alpha and beta; disulfide-linked. Expressed by the venom gland.

The protein localises to the secreted. Its function is as follows. Platelet antagonist that specifically and reversibly binds to a site on platelet glycoprotein Ibalpha (GP1BA) close to or identical with the site for vWF binding. It inhibits the binding of vWF to platelets and vWF-dependent shear-induced platelet aggregation. The protein is Snaclec tokaracetin subunit beta of Protobothrops tokarensis (Tokara habu).